We begin with the raw amino-acid sequence, 348 residues long: Dihydroorotase (348 aa).

Zn(2+) contacts are provided by His17 and His19. Residues 19-21 (HLR) and Asn45 each bind substrate. The Zn(2+) site is built by Lys103, His140, and His178. At Lys103 the chain carries N6-carboxylysine. His140 serves as a coordination point for substrate. Substrate is bound at residue Leu223. A Zn(2+)-binding site is contributed by Asp251. Asp251 is a catalytic residue. Residues His255 and Ala267 each coordinate substrate.

Belongs to the metallo-dependent hydrolases superfamily. DHOase family. Class II DHOase subfamily. In terms of assembly, homodimer. Requires Zn(2+) as cofactor.

It carries out the reaction (S)-dihydroorotate + H2O = N-carbamoyl-L-aspartate + H(+). It functions in the pathway pyrimidine metabolism; UMP biosynthesis via de novo pathway; (S)-dihydroorotate from bicarbonate: step 3/3. Its function is as follows. Catalyzes the reversible cyclization of carbamoyl aspartate to dihydroorotate. This is Dihydroorotase from Salmonella paratyphi A (strain ATCC 9150 / SARB42).